A 322-amino-acid chain; its full sequence is RING finger protein 113B (322 aa).

The interval 24–92 (KPGRKGAAGL…EEAAPESLDV (69 aa)) is disordered. Residues 46 to 60 (SSSSGDEGDTVAQPP) show a composition bias toward low complexity. The segment at 190–218 (DYQPDICKDYKETGFCGFGDSCKFLHDRS) adopts a C3H1-type zinc-finger fold. The RING-type zinc finger occupies 256 to 294 (CFICRQAFQNPVVTKCRHYFCESCALEHFRATPRCYICD).

In Homo sapiens (Human), this protein is RING finger protein 113B (RNF113B).